Consider the following 137-residue polypeptide: uncharacterized protein (137 aa).

This is an uncharacterized protein from Bacillus subtilis (strain 168).